We begin with the raw amino-acid sequence, 399 residues long: Interferon regulatory factor 9 (399 aa).

Residues 9–116 constitute a DNA-binding region (IRF tryptophan pentad repeat); that stretch reads TRKLRSWIVE…EPYKVYRILP (108 aa). The disordered stretch occupies residues 118 to 189; the sequence is GTLPNQPRNQ…CNSELEEGAG (72 aa). A compositionally biased stretch (polar residues) spans 120 to 129; it reads LPNQPRNQKS. S139 is subject to Phosphoserine. A compositionally biased stretch (polar residues) spans 148–157; it reads NGRTNGVVNH. Over residues 171–189 the composition is skewed to low complexity; it reads SNRSDSNSNCNSELEEGAG. A Phosphoserine modification is found at S393.

The protein belongs to the IRF family. As to quaternary structure, interacts with STAT2 in the cytoplasm. Forms the interferon-stimulated gene factor 3 complex (ISGF3) with the heterodimer STAT1:STAT2; upon stimulation.

It is found in the nucleus. Transcription factor that plays an essential role in anti-viral immunity. It mediates signaling by type I IFNs (IFN-alpha and IFN-beta). Following type I IFN binding to cell surface receptors, Jak kinases (TYK2 and JAK1) are activated, leading to tyrosine phosphorylation of STAT1 and STAT2. IRF9/ISGF3G associates with the phosphorylated STAT1:STAT2 dimer to form a complex termed ISGF3 transcription factor, that enters the nucleus. ISGF3 binds to the IFN stimulated response element (ISRE) to activate the transcription of interferon stimulated genes, which drive the cell in an antiviral state. This is Interferon regulatory factor 9 (Irf9) from Mus musculus (Mouse).